The chain runs to 112 residues: Putative pterin-4-alpha-carbinolamine dehydratase (112 aa).

It belongs to the pterin-4-alpha-carbinolamine dehydratase family.

It carries out the reaction (4aS,6R)-4a-hydroxy-L-erythro-5,6,7,8-tetrahydrobiopterin = (6R)-L-erythro-6,7-dihydrobiopterin + H2O. The sequence is that of Putative pterin-4-alpha-carbinolamine dehydratase from Vibrio parahaemolyticus serotype O3:K6 (strain RIMD 2210633).